The chain runs to 70 residues: DNA-directed RNA polymerase subunit epsilon (70 aa).

It belongs to the RNA polymerase subunit epsilon family. RNAP is composed of a core of 2 alpha, a beta and a beta' subunit. The core is associated with a delta subunit, and at least one of epsilon or omega. When a sigma factor is associated with the core the holoenzyme is formed, which can initiate transcription.

It carries out the reaction RNA(n) + a ribonucleoside 5'-triphosphate = RNA(n+1) + diphosphate. In terms of biological role, a non-essential component of RNA polymerase (RNAP). In Bacillus cereus (strain ZK / E33L), this protein is DNA-directed RNA polymerase subunit epsilon.